A 61-amino-acid polypeptide reads, in one-letter code: Cytotoxin 1 (61 aa).

4 disulfides stabilise this stretch: C3/C22, C15/C39, C43/C54, and C55/C60.

The protein belongs to the three-finger toxin family. Short-chain subfamily. Type IB cytotoxin sub-subfamily. As to expression, expressed by the venom gland.

It localises to the secreted. Functionally, this protein lyses red blood cells and has cardiotoxic and hypotensive activities. The sequence is that of Cytotoxin 1 from Hemachatus haemachatus (Rinkhals).